We begin with the raw amino-acid sequence, 477 residues long: Ectonucleotide pyrophosphatase/phosphodiesterase family member 5 (477 aa).

The signal sequence occupies residues 1–24; that stretch reads MTSKFLLVSFILAALSLSTTFSLQ. Residues Asp36 and Thr72 each coordinate Zn(2+). The active-site Nucleophile is the Thr72. Residues Asn101 and Asn158 are each glycosylated (N-linked (GlcNAc...) asparagine). Positions 191, 195, 238, and 239 each coordinate Zn(2+). Residues Asn292 and Asn329 are each glycosylated (N-linked (GlcNAc...) asparagine). A Zn(2+)-binding site is contributed by His339. Asn362, Asn369, Asn382, and Asn389 each carry an N-linked (GlcNAc...) asparagine glycan. A helical transmembrane segment spans residues 432–452; the sequence is PYFIGVSLGSIIVIVFFVIFI.

It belongs to the nucleotide pyrophosphatase/phosphodiesterase family. It depends on Zn(2+) as a cofactor. Post-translationally, N-glycosylated.

The protein localises to the secreted. Its subcellular location is the membrane. Its function is as follows. Can hydrolyze NAD but cannot hydrolyze nucleotide di- and triphosphates. Lacks lysopholipase D activity. May play a role in neuronal cell communication. The chain is Ectonucleotide pyrophosphatase/phosphodiesterase family member 5 from Homo sapiens (Human).